The sequence spans 178 residues: Non-specific lipid transfer protein-like 1 (178 aa).

Residues 1–26 (MAVAARAAAVACLLVVGLAAVAGVDG) form the signal peptide. Intrachain disulfides connect cysteine 50/cysteine 68 and cysteine 69/cysteine 110. Asparagine 99 carries N-linked (GlcNAc...) asparagine glycosylation. Alanine 149 carries GPI-anchor amidated alanine lipidation. Residues 150-178 (AARSPMASTTAVLVVAAAVAAPLLAFFHF) constitute a propeptide, removed in mature form.

Belongs to the plant LTP family. In terms of processing, O-glycosylated on hydroxyprolines; noncontiguous hydroxylproline residues are glycosylated with arabinogalactan. Expressed in roots, stems, leaves, flowers and seeds.

It is found in the vacuole. The protein localises to the aleurone grain membrane. This Oryza sativa subsp. japonica (Rice) protein is Non-specific lipid transfer protein-like 1 (LTPL1).